The following is a 283-amino-acid chain: Thymidylate synthase (283 aa).

R22 lines the dUMP pocket. C160 functions as the Nucleophile in the catalytic mechanism. DUMP-binding positions include 180–183, N191, and 221–223; these read RSCD and HIY. D183 contacts (6R)-5,10-methylene-5,6,7,8-tetrahydrofolate. (6R)-5,10-methylene-5,6,7,8-tetrahydrofolate is bound at residue S282.

Belongs to the thymidylate synthase family. Bacterial-type ThyA subfamily. Homodimer.

Its subcellular location is the cytoplasm. It catalyses the reaction dUMP + (6R)-5,10-methylene-5,6,7,8-tetrahydrofolate = 7,8-dihydrofolate + dTMP. Its pathway is pyrimidine metabolism; dTTP biosynthesis. Functionally, catalyzes the reductive methylation of 2'-deoxyuridine-5'-monophosphate (dUMP) to 2'-deoxythymidine-5'-monophosphate (dTMP) while utilizing 5,10-methylenetetrahydrofolate (mTHF) as the methyl donor and reductant in the reaction, yielding dihydrofolate (DHF) as a by-product. This enzymatic reaction provides an intracellular de novo source of dTMP, an essential precursor for DNA biosynthesis. This is Thymidylate synthase from Shewanella loihica (strain ATCC BAA-1088 / PV-4).